The sequence spans 330 residues: tRNA U34 carboxymethyltransferase (330 aa).

Carboxy-S-adenosyl-L-methionine contacts are provided by residues Lys91, Trp105, Lys110, Gly130, 152–154 (DPS), 181–182 (IE), Met196, Tyr200, and Arg315.

Belongs to the class I-like SAM-binding methyltransferase superfamily. CmoB family. Homotetramer.

It catalyses the reaction carboxy-S-adenosyl-L-methionine + 5-hydroxyuridine(34) in tRNA = 5-carboxymethoxyuridine(34) in tRNA + S-adenosyl-L-homocysteine + H(+). Its function is as follows. Catalyzes carboxymethyl transfer from carboxy-S-adenosyl-L-methionine (Cx-SAM) to 5-hydroxyuridine (ho5U) to form 5-carboxymethoxyuridine (cmo5U) at position 34 in tRNAs. The protein is tRNA U34 carboxymethyltransferase of Shewanella frigidimarina (strain NCIMB 400).